A 397-amino-acid chain; its full sequence is Lymphoid enhancer-binding factor 1 (397 aa).

Residues 1–60 (MPQLSGGGGGGDPELCATDEMIPFKDEGDPQKEKIFAEISHPEEEGDLADIKSSLVNESE) are CTNNB1-binding. A Glycyl lysine isopeptide (Lys-Gly) (interchain with G-Cter in SUMO) cross-link involves residue Lys25. The segment at 38-102 (EISHPEEEGD…KHPDGGLYNK (65 aa)) is disordered. A compositionally biased stretch (basic and acidic residues) spans 80–96 (PYHDKAREHPDDGKHPD). Ser130 is subject to Phosphoserine. Thr153 is modified (phosphothreonine; by NLK). Ser164 bears the Phosphoserine; by NLK mark. 2 disordered regions span residues 164 to 190 (SPGSHPSHIPSEVNPKQGMSRHPPAPE) and 266 to 296 (VKQEHPHTDSDLMHVKPEHEQRKEQEPKRPH). Lys267 is covalently cross-linked (Glycyl lysine isopeptide (Lys-Gly) (interchain with G-Cter in SUMO)). Residues 267 to 294 (KQEHPHTDSDLMHVKPEHEQRKEQEPKR) show a composition bias toward basic and acidic residues. Residues 297–365 (IKKPLNAFML…LHMQLYPGWS (69 aa)) constitute a DNA-binding region (HMG box). Residues 367–397 (RDNYGKKKKRKREKLQESTSGTGPRMTAAYI) are disordered.

Belongs to the TCF/LEF family. Binds the armadillo repeat of CTNNB1 and forms a stable complex. Interacts with TLE1, PIASG, ALYREF/THOC4, EP300, MDFI and MDFIC. Interacts with DAZAP2. Phosphorylated at Thr-153 and/or Ser-164 by NLK. Phosphorylation by NLK at these sites represses LEF1-mediated transcriptional activation of target genes of the canonical Wnt signaling pathway.

Its subcellular location is the nucleus. Transcription factor that binds DNA in a sequence-specific manner. Participates in the Wnt signaling pathway. Activates transcription of target genes in the presence of CTNNB1 and EP300. PIASG antagonizes both Wnt-dependent and Wnt-independent activation by LEF1. TLE1, TLE2, TLE3 and TLE4 repress transactivation mediated by LEF1 and CTNNB1. Regulates T-cell receptor alpha enhancer function. Required for IL17A expressing gamma-delta T-cell maturation and development, via binding to regulator loci of BLK to modulate expression. Acts as a positive regulator of odontoblast differentiation during mesenchymal tooth germ formation, expression is repressed during the bell stage by MSX1-mediated inhibition of CTNNB1 signaling. May play a role in hair cell differentiation and follicle morphogenesis. The polypeptide is Lymphoid enhancer-binding factor 1 (Rattus norvegicus (Rat)).